Here is a 154-residue protein sequence, read N- to C-terminus: UPF0547 protein C16orf87 homolog (154 aa).

Positions Asn43–Glu119 are disordered. The segment covering Val68 to Arg84 has biased composition (basic and acidic residues). Ser91 carries the phosphoserine modification. The stretch at Lys104–Lys132 forms a coiled coil. The segment covering Lys109–Glu119 has biased composition (basic and acidic residues).

The protein belongs to the UPF0547 family.

The sequence is that of UPF0547 protein C16orf87 homolog from Mus musculus (Mouse).